Consider the following 138-residue polypeptide: Large ribosomal subunit protein uL16 (138 aa).

Residues 1–21 show a composition bias toward basic residues; sequence MLIPRKVKHRKQHHPSLRGRA. The disordered stretch occupies residues 1–22; it reads MLIPRKVKHRKQHHPSLRGRAK.

Belongs to the universal ribosomal protein uL16 family. Part of the 50S ribosomal subunit.

Functionally, binds 23S rRNA and is also seen to make contacts with the A and possibly P site tRNAs. The polypeptide is Large ribosomal subunit protein uL16 (Thermobifida fusca (strain YX)).